A 242-amino-acid polypeptide reads, in one-letter code: Eukaryotic translation initiation factor 3 subunit J (242 aa).

Residues 1-10 show a composition bias toward acidic residues; the sequence is MASWDDEDFE. 3 disordered regions span residues 1 to 58, 71 to 97, and 201 to 242; these read MASW…KAQR, MKLK…MMNA, and REEK…DDFM. Positions 11–21 are enriched in low complexity; that stretch reads VPAAATPAVPA. Residues 23–38 are compositionally biased toward acidic residues; it reads WDDDEEEDVMDSWDAE. Over residues 71–89 the composition is skewed to basic and acidic residues; that stretch reads MKLKPEDASTKRDRQRQAE.

This sequence belongs to the eIF-3 subunit J family. As to quaternary structure, component of the eukaryotic translation initiation factor 3 (eIF-3) complex.

It is found in the cytoplasm. Component of the eukaryotic translation initiation factor 3 (eIF-3) complex, which is involved in protein synthesis of a specialized repertoire of mRNAs and, together with other initiation factors, stimulates binding of mRNA and methionyl-tRNAi to the 40S ribosome. The eIF-3 complex specifically targets and initiates translation of a subset of mRNAs involved in cell proliferation. This is Eukaryotic translation initiation factor 3 subunit J from Yarrowia lipolytica (strain CLIB 122 / E 150) (Yeast).